A 455-amino-acid polypeptide reads, in one-letter code: Tubulin alpha chain (455 aa).

Positions 11, 77, 145, 149, 150, 184, 211, and 233 each coordinate GTP. Glu-77 is a Mg(2+) binding site. Glu-259 is an active-site residue.

This sequence belongs to the tubulin family. Dimer of alpha and beta chains. A typical microtubule is a hollow water-filled tube with an outer diameter of 25 nm and an inner diameter of 15 nM. Alpha-beta heterodimers associate head-to-tail to form protofilaments running lengthwise along the microtubule wall with the beta-tubulin subunit facing the microtubule plus end conferring a structural polarity. Microtubules usually have 13 protofilaments but different protofilament numbers can be found in some organisms and specialized cells. Mg(2+) serves as cofactor.

The protein resides in the cytoplasm. It localises to the cytoskeleton. It carries out the reaction GTP + H2O = GDP + phosphate + H(+). Tubulin is the major constituent of microtubules, a cylinder consisting of laterally associated linear protofilaments composed of alpha- and beta-tubulin heterodimers. Microtubules grow by the addition of GTP-tubulin dimers to the microtubule end, where a stabilizing cap forms. Below the cap, tubulin dimers are in GDP-bound state, owing to GTPase activity of alpha-tubulin. The chain is Tubulin alpha chain from Entamoeba histolytica (strain ATCC 30459 / HM-1:IMSS / ABRM).